Reading from the N-terminus, the 948-residue chain is Glycine dehydrogenase (decarboxylating) (948 aa).

Lys696 is subject to N6-(pyridoxal phosphate)lysine.

It belongs to the GcvP family. As to quaternary structure, the glycine cleavage system is composed of four proteins: P, T, L and H. Requires pyridoxal 5'-phosphate as cofactor.

The enzyme catalyses N(6)-[(R)-lipoyl]-L-lysyl-[glycine-cleavage complex H protein] + glycine + H(+) = N(6)-[(R)-S(8)-aminomethyldihydrolipoyl]-L-lysyl-[glycine-cleavage complex H protein] + CO2. Functionally, the glycine cleavage system catalyzes the degradation of glycine. The P protein binds the alpha-amino group of glycine through its pyridoxal phosphate cofactor; CO(2) is released and the remaining methylamine moiety is then transferred to the lipoamide cofactor of the H protein. In Akkermansia muciniphila (strain ATCC BAA-835 / DSM 22959 / JCM 33894 / BCRC 81048 / CCUG 64013 / CIP 107961 / Muc), this protein is Glycine dehydrogenase (decarboxylating).